A 151-amino-acid polypeptide reads, in one-letter code: Ribosome maturation factor RimP (151 aa).

This sequence belongs to the RimP family.

The protein resides in the cytoplasm. Its function is as follows. Required for maturation of 30S ribosomal subunits. This Caldanaerobacter subterraneus subsp. tengcongensis (strain DSM 15242 / JCM 11007 / NBRC 100824 / MB4) (Thermoanaerobacter tengcongensis) protein is Ribosome maturation factor RimP.